Consider the following 92-residue polypeptide: Trp operon repressor homolog (92 aa).

The DNA-binding element occupies 56-79; sequence QREVASKLGVSITKITRGAANLQD.

The protein belongs to the TrpR family. In terms of assembly, homodimer.

Its subcellular location is the cytoplasm. This protein is an aporepressor. When complexed with L-tryptophan it binds the operator region of the trp operon and prevents the initiation of transcription. The chain is Trp operon repressor homolog from Xylella fastidiosa (strain M23).